A 1029-amino-acid chain; its full sequence is DNA repair protein RAD5A (1029 aa).

Residues 83–104 form a disordered region; sequence SVGANHRVEEENESVNGGGEES. The 217-residue stretch at 406–622 folds into the Helicase ATP-binding domain; that stretch reads PSTLQMARGG…YSLLRFLRIE (217 aa). An ATP-binding site is contributed by 419–426; the sequence is DAMGLGKT. A DEAH box motif is present at residues 573–576; it reads DEAH. The RING-type zinc-finger motif lies at 794–834; it reads CPICLEALEDAVLTPCAHRLCRECLLASWRNSTSGLCPVCR. The region spanning 864-1029 is the Helicase C-terminal domain; that stretch reads KITALLEELE…RIEELKMLFT (166 aa).

It belongs to the SNF2/RAD54 helicase family. RAD16 subfamily.

The protein resides in the nucleus. Functions in error-free postreplication DNA repair or DNA-damage tolerance (DTT) pathway. Required for homologous recombination (HR) induced by DNA double-strand break (DSB) in somatic cells. Required for damage-induced DNA repair, independently of MUS81 and RECQL4A. Plays a role in synthesis-dependent strand annealing (SDSA) but not in single-strand annealing (SSA). Possesses double-stranded DNA-dependent ATPase activity. Is able to regress replication forks with preference for forks with a leading strand gap. Is able to catalyze branch migration of Holliday junctions and is unaffected by protein blockades. This is DNA repair protein RAD5A from Arabidopsis thaliana (Mouse-ear cress).